We begin with the raw amino-acid sequence, 499 residues long: Serine/threonine-protein phosphatase 5 (499 aa).

The interval 1 to 23 (MAMAEGERTECAEPPRDEPPAEG) is disordered. Position 2 is an N-acetylalanine (Ala2). TPR repeat units follow at residues 28-61 (AEELKTQANDYFKAKDYENAIKFYSQAIELNPSN), 62-95 (AIYYGNRSLAYLRTECYGYALGDATRAIELDKKY), and 96-129 (IKGYYRRAASNMALGKFRAALRDYETVVKVKPND). Positions 200–499 (DQKKLHRKCA…ANTLLQLGMM (300 aa)) are catalytic. Residues Asp242, His244, and Asp271 each contribute to the Mg(2+) site. His244 is a substrate binding site. Substrate-binding positions include Arg275 and 303–304 (NH). Asn303 lines the Mg(2+) pocket. The Proton donor/acceptor role is filled by His304. His352 is a binding site for Mg(2+). Substrate-binding residues include Arg400 and His427. His427 provides a ligand contact to Mg(2+). A required for autoinhibition region spans residues 495 to 499 (QLGMM).

This sequence belongs to the PPP phosphatase family. PP-5 (PP-T) subfamily. Probably forms a complex composed of chaperones HSP90 and HSP70, co-chaperones STIP1/HOP, CDC37, PPP5C, PTGES3/p23, TSC1 and client protein TSC2. Probably forms a complex composed of chaperones HSP90 and HSP70, co-chaperones CDC37, PPP5C, TSC1 and client protein TSC2, CDK4, AKT, RAF1 and NR3C1; this complex does not contain co-chaperones STIP1/HOP and PTGES3/p23. Part of a complex with HSP90/HSP90AA1 and steroid receptors. Interacts (via TPR repeats) with HSP90AA1 (via TPR repeat-binding motif) or HSPA1A/HSPA1B; the interaction is direct and activates the phosphatase activity. Dissociates from HSPA1A/HSPA1B and HSP90AA1 in response to arachidonic acid. Interacts with CPNE1 (via VWFA domain). Interacts with CDC16, CDC27. Interacts with KLHDC10 (via the 6 Kelch repeats); inhibits the phosphatase activity on MAP3K5. Interacts with ATM and ATR; both interactions are induced by DNA damage and enhance ATM and ATR kinase activity. Interacts with RAD17; reduced by DNA damage. Interacts with nuclear receptors such as NR3C1/GCR and PPARG (activated by agonist); regulates their transactivation activities. Interacts (via TPR repeats) with S100 proteins S100A1, S100A2, S100A6, S100B and S100P; the interactions are calcium-dependent, strongly activate PPP5C phosphatase activity and compete with HSP90AA1 and MAP3K5 interactions. Interacts with SMAD2 and SMAD3 but not with SMAD1; decreases SMAD3 phosphorylation and protein levels. Interacts (via TPR repeats) with CRY1 and CRY2; the interaction with CRY2 down-regulates the phosphatase activity on CSNK1E. Interacts (via TPR repeats) with the active form of RAC1, GNA12 or GNA13; these interactions activate the phosphatase activity and translocate PPP5C to the cell membrane. Interacts with FLCN. The cofactor is Mg(2+). Requires Mn(2+) as cofactor. Activated by at least two different proteolytic cleavages producing a 56 kDa and a 50 kDa form. Predominantly found in brain and, in lower levels, in testis, but was nearly undetectable in spleen, lung, skeletal muscle, kidney and liver.

The protein localises to the nucleus. It localises to the cytoplasm. Its subcellular location is the cell membrane. It carries out the reaction O-phospho-L-seryl-[protein] + H2O = L-seryl-[protein] + phosphate. The catalysed reaction is O-phospho-L-threonyl-[protein] + H2O = L-threonyl-[protein] + phosphate. With respect to regulation, autoinhibited. In the autoinhibited state, the TPR domain interacts with the catalytic region and prevents substrate access to the catalytic pocket. Allosterically activated by various polyunsaturated fatty acids, free long-chain fatty-acids and long-chain fatty acyl-CoA esters, arachidonic acid being the most effective activator. HSP90A and probably RAC1, GNA12 and GNA13 can also release the autoinhibition by the TPR repeat. Activation by RAC1, GNA12 and GNA13 is synergistic with the one produced by fatty acids binding. Inhibited by okadaic acid. In terms of biological role, serine/threonine-protein phosphatase that dephosphorylates a myriad of proteins involved in different signaling pathways including the kinases CSNK1E, ASK1/MAP3K5, PRKDC and RAF1, the nuclear receptors NR3C1, PPARG, ESR1 and ESR2, SMAD proteins and TAU/MAPT. Implicated in wide ranging cellular processes, including apoptosis, differentiation, DNA damage response, cell survival, regulation of ion channels or circadian rhythms, in response to steroid and thyroid hormones, calcium, fatty acids, TGF-beta as well as oxidative and genotoxic stresses. Participates in the control of DNA damage response mechanisms such as checkpoint activation and DNA damage repair through, for instance, the regulation ATM/ATR-signaling and dephosphorylation of PRKDC and TP53BP1. Inhibits ASK1/MAP3K5-mediated apoptosis induced by oxidative stress. Plays a positive role in adipogenesis, mainly through the dephosphorylation and activation of PPARG transactivation function. Also dephosphorylates and inhibits the anti-adipogenic effect of NR3C1. Regulates the circadian rhythms, through the dephosphorylation and activation of CSNK1E. May modulate TGF-beta signaling pathway by the regulation of SMAD3 phosphorylation and protein expression levels. Dephosphorylates and may play a role in the regulation of TAU/MAPT. Through their dephosphorylation, may play a role in the regulation of ions channels such as KCNH2. Dephosphorylate FNIP1, disrupting interaction with HSP90AA1/Hsp90. In Rattus norvegicus (Rat), this protein is Serine/threonine-protein phosphatase 5 (Ppp5c).